Consider the following 414-residue polypeptide: Ribulose bisphosphate carboxylase/oxygenase activase (414 aa).

An ATP-binding site is contributed by Gly37–Thr44. The interval Arg296 to Leu326 is disordered. The segment covering Pro311–Leu326 has biased composition (polar residues).

Belongs to the RuBisCO activase family.

Its function is as follows. Activation of RuBisCO (ribulose-1,5-bisohosphate carboxylase/oxygenase; EC 4.1.1.39) involves the ATP-dependent carboxylation of the epsilon-amino group of lysine leading to a carbamate structure. This Nostoc sp. (strain PCC 7120 / SAG 25.82 / UTEX 2576) protein is Ribulose bisphosphate carboxylase/oxygenase activase (rca).